We begin with the raw amino-acid sequence, 164 residues long: Ubiquitin-fold modifier-conjugating enzyme 1 (164 aa).

The Glycyl thioester intermediate role is filled by C116.

The protein belongs to the ubiquitin-conjugating enzyme family. UFC1 subfamily.

Functionally, E2-like enzyme which forms an intermediate with UFM1 via a thioester linkage. This chain is Ubiquitin-fold modifier-conjugating enzyme 1, found in Drosophila erecta (Fruit fly).